Here is a 444-residue protein sequence, read N- to C-terminus: D(2) dopamine receptor (444 aa).

At 1-37 the chain is on the extracellular side; that stretch reads MDPLNLSWYDDDLERQNWSRPFNGSEGKADRPHYNYY. N5, N17, and N23 each carry an N-linked (GlcNAc...) asparagine glycan. A helical transmembrane segment spans residues 38 to 60; it reads AMLLTLLIFIIVFGNVLVCMAVS. Topologically, residues 61 to 70 are cytoplasmic; it reads REKALQTTTN. A helical transmembrane segment spans residues 71 to 93; sequence YLIVSLAVADLLVATLVMPWVVY. The Extracellular segment spans residues 94–108; it reads LEVVGEWKFSRIHCD. A disulfide bridge connects residues C107 and C182. Residues 109–130 traverse the membrane as a helical segment; that stretch reads IFVTLDVMMCTASILNLCAISI. The Cytoplasmic portion of the chain corresponds to 131-151; that stretch reads DRYTAVAMPMLYNTRYSSKRR. Residues 152-172 form a helical membrane-spanning segment; sequence VTVMIAIVWVLSFTISCPLLF. At 173 to 188 the chain is on the extracellular side; it reads GLNNTDQNECIIANPA. The helical transmembrane segment at 189–213 threads the bilayer; the sequence is FVVYSSIVSFYVPFIVTLLVYIKIY. Positions 211-374 are interaction with PPP1R9B; it reads KIYIVLRKRR…SQQKEKKATQ (164 aa). Topologically, residues 214-374 are cytoplasmic; that stretch reads IVLRKRRKRV…SQQKEKKATQ (161 aa). Positions 282 to 329 are disordered; the sequence is EMLSSTSPPERTRYSPIPPSHHQLTLPDPSHHGLHSNPDSPAKPEKNG. A helical membrane pass occupies residues 375 to 396; that stretch reads MLAIVLGVFIICWLPFFITHIL. Topologically, residues 397–410 are extracellular; it reads NIHCDCNIPPVLYS. A disulfide bridge links C400 with C402. The chain crosses the membrane as a helical span at residues 411-432; sequence AFTWLGYVNSAVNPIIYTTFNI. Over 433-444 the chain is Cytoplasmic; sequence EFRKAFMKILHC. A lipid anchor (S-palmitoyl cysteine) is attached at C444.

The protein belongs to the G-protein coupled receptor 1 family. In terms of assembly, forms homo- and heterooligomers with DRD4. The interaction with DRD4 may modulate agonist-induced downstream signaling. Interacts with CADPS and CADPS2. Interacts with GPRASP1, PPP1R9B and CLIC6. Interacts with ARRB2. Interacts with HTR2A. Interacts with DRD1. Interacts with KCNA2. In terms of processing, palmitoylated. Palmitoylation which is required for proper localization to the plasma membrane and stability of the receptor could be carried on by ZDHHC4, ZDHHC3 and ZDHHC8. In terms of tissue distribution, expressed in the anterior lobe of the pituitary gland. Expressed ventral tegmental area of the midbrain and the pars compacta of the substantia nigra. Expressed seven times more than isoform short in the caudate nucleus. Expressed in the anterior lobe of the pituitary gland. Expressed in the caudate nucleus. Not expressed in the wider brain.

The protein localises to the cell membrane. The protein resides in the golgi apparatus membrane. Its function is as follows. Dopamine receptor whose activity is mediated by G proteins which inhibit adenylyl cyclase. Positively regulates postnatal regression of retinal hyaloid vessels via suppression of VEGFR2/KDR activity, downstream of OPN5. The protein is D(2) dopamine receptor (Drd2) of Rattus norvegicus (Rat).